The primary structure comprises 1881 residues: Endoribonuclease Dicer-S (1881 aa).

Residues 41–217 (LLEAALDHNI…DLEEKIQNLE (177 aa)) enclose the Helicase ATP-binding domain. 54–61 (LNSGSGKT) contributes to the ATP binding site. Residues 165–168 (DECH) carry the DECH box motif. A Helicase C-terminal domain is found at 425 to 594 (SFPSPFTNIL…SMDCGNTESE (170 aa)). One can recognise a Dicer dsRNA-binding fold domain in the interval 622 to 714 (AIGHINRYCA…MPVGKETVKY (93 aa)). One can recognise a PAZ domain in the interval 887-1034 (KFVEDIEKSE…LVPELCAIHP (148 aa)). RNase III domains follow at residues 1249-1380 (TSDI…ETSG) and 1625-1783 (FENF…MDSG). 6 residues coordinate Mg(2+): glutamate 1293, aspartate 1371, glutamate 1374, glutamate 1664, aspartate 1769, and glutamate 1772. The DRBM domain maps to 1808–1873 (VPRSPVRELL…ARRALRSLKA (66 aa)).

Belongs to the helicase family. Dicer subfamily. Component of the RISC loading complex (RLC), or micro-RNA (miRNA) loading complex (miRLC), which is composed of dicer1, ago2 and tarbp2; dicer1 and tarbp2 are required to process precursor miRNAs (pre-miRNAs) to mature miRNAs and then load them onto ago2. Note that the trimeric RLC/miRLC is also referred to as RISC. Mg(2+) serves as cofactor. Requires Mn(2+) as cofactor.

The protein localises to the cytoplasm. The enzyme catalyses Endonucleolytic cleavage to 5'-phosphomonoester.. In terms of biological role, double-stranded RNA (dsRNA) endoribonuclease playing a central role in short dsRNA-mediated post-transcriptional gene silencing. Cleaves naturally occurring long dsRNAs and short hairpin pre-microRNAs (miRNA) into fragments of twenty-one to twenty-three nucleotides with 3' overhang of two nucleotides, producing respectively short interfering RNAs (siRNA) and mature microRNAs. SiRNAs and miRNAs serve as guide to direct the RNA-induced silencing complex (RISC) to complementary RNAs to degrade them or prevent their translation. Gene silencing mediated by siRNAs, also called RNA interference, controls the elimination of transcripts from mobile and repetitive DNA elements of the genome but also the degradation of exogenous RNA of viral origin for instance. The miRNA pathway on the other side is a mean to specifically regulate the expression of target genes. During embryonic development, at the left-right organizer, post-transcriptionally regulates the expression of dand5 in flow sensor cells. In post-flow stages, acts along with Bicc1 to repress dand5 mRNA translation and decay. Decreased Dand5 expression lifts repression of Nodal and defines leftness by induction of the lateral plate mesoderm Nodal signaling cascade. The protein is Endoribonuclease Dicer-S (dicer1.S) of Xenopus laevis (African clawed frog).